The primary structure comprises 722 residues: Zinc finger protein 600 (722 aa).

A C2H2-type 1; degenerate zinc finger spans residues 162 to 184; it reads FQCNESGKAFNCSSLLRKHQIPH. 9 C2H2-type zinc fingers span residues 190–212, 218–240, 246–268, 274–296, 302–324, 330–352, 358–380, 386–408, and 414–436; these read YKCD…CRCH, YKCN…RRLH, HKCN…KAIH, YKCN…RRIH, YKCE…KRIH, YKCK…KRIH, YKCN…HRLH, YKCK…TRIH, and YKCN…KSIH. The segment at 442–464 adopts a C2H2-type 11; degenerate zinc-finger fold; that stretch reads YKYEECEKVFSCGSTLETHKIIH. 9 C2H2-type zinc fingers span residues 470–492, 498–520, 526–548, 554–576, 582–604, 610–632, 638–660, 666–688, and 694–716; these read YKCK…TRIH, YKCN…RRVH, YKCN…RRLH, YKCT…TRIH, YKCN…HRIH, YKCE…RRIH, YKCK…TGLH, and YKCN…QAVH.

The protein belongs to the krueppel C2H2-type zinc-finger protein family.

It localises to the nucleus. Functionally, may be involved in transcriptional regulation. This is Zinc finger protein 600 (ZNF600) from Homo sapiens (Human).